Consider the following 124-residue polypeptide: Small ribosomal subunit protein uS12c (124 aa).

Disordered regions lie at residues 1–28 (MPTI…KSCP) and 104–124 (AAGV…KPKS). Composition is skewed to basic residues over residues 11–20 (ERRKINKKTK) and 109–124 (DRRK…KPKS).

This sequence belongs to the universal ribosomal protein uS12 family. Part of the 30S ribosomal subunit.

Its subcellular location is the plastid. It is found in the chloroplast. Its function is as follows. With S4 and S5 plays an important role in translational accuracy. Located at the interface of the 30S and 50S subunits. This Porphyra purpurea (Red seaweed) protein is Small ribosomal subunit protein uS12c (rps12).